A 359-amino-acid chain; its full sequence is MKILNLIQPGVVTGNECQIIFELAKKKKFAIPAVNCIGTDSINAVLETASRVKSPVIIQFSYGGASFIAGYKRTSSKNPEDQAIQGSISGAQHVHLMSQYYQIPVILHTDHCSKEMLPWIDGLLEEGKKHYKNFGKPLFTSHMIDLSKEHLKENIAICSNYLKKIKKINMILEIELGCTGGEEDGIDNSNIDKKLLYTQPKDVNYAYKKLSKISTNFTIAASFGNVHGVYQPGNVNLKPNILKESQEYVSTKHNLKKLPLNLVFHGGSGSDLKEIHESIEYGIVKMNIDTDIQWASWKGVFNFYKKNKDFLQKQIGNKNGKNIPNKKYYDPRSWIRESQESMSKRLEKTFKDLNAFNIL.

D-glyceraldehyde 3-phosphate is bound at residue Ser-61. Asp-110 serves as the catalytic Proton donor. The Zn(2+) site is built by His-111, Asp-145, Glu-175, and His-227. Gly-228 contacts dihydroxyacetone phosphate. His-265 is a binding site for Zn(2+). Dihydroxyacetone phosphate is bound by residues 266 to 268 and 287 to 290; these read GGS and NIDT.

The protein belongs to the class II fructose-bisphosphate aldolase family. It depends on Zn(2+) as a cofactor.

It catalyses the reaction beta-D-fructose 1,6-bisphosphate = D-glyceraldehyde 3-phosphate + dihydroxyacetone phosphate. It functions in the pathway carbohydrate degradation; glycolysis; D-glyceraldehyde 3-phosphate and glycerone phosphate from D-glucose: step 4/4. Functionally, catalyzes the aldol condensation of dihydroxyacetone phosphate (DHAP or glycerone-phosphate) with glyceraldehyde 3-phosphate (G3P) to form fructose 1,6-bisphosphate (FBP) in gluconeogenesis and the reverse reaction in glycolysis. This chain is Fructose-bisphosphate aldolase class 2 (fbaA), found in Buchnera aphidicola subsp. Schizaphis graminum (strain Sg).